We begin with the raw amino-acid sequence, 244 residues long: Phosphoadenosine 5'-phosphosulfate reductase (244 aa).

Cys239 functions as the Nucleophile; cysteine thiosulfonate intermediate in the catalytic mechanism.

Belongs to the PAPS reductase family. CysH subfamily.

It localises to the cytoplasm. It carries out the reaction [thioredoxin]-disulfide + sulfite + adenosine 3',5'-bisphosphate + 2 H(+) = [thioredoxin]-dithiol + 3'-phosphoadenylyl sulfate. It functions in the pathway sulfur metabolism; hydrogen sulfide biosynthesis; sulfite from sulfate: step 3/3. Its function is as follows. Catalyzes the formation of sulfite from phosphoadenosine 5'-phosphosulfate (PAPS) using thioredoxin as an electron donor. In Photorhabdus laumondii subsp. laumondii (strain DSM 15139 / CIP 105565 / TT01) (Photorhabdus luminescens subsp. laumondii), this protein is Phosphoadenosine 5'-phosphosulfate reductase.